Consider the following 306-residue polypeptide: Erythromycin 3''-O-methyltransferase (306 aa).

S-adenosyl-L-methionine-binding residues include leucine 157 and histidine 162.

This sequence belongs to the methyltransferase superfamily.

It catalyses the reaction erythromycin C + S-adenosyl-L-methionine = erythromycin A + S-adenosyl-L-homocysteine + H(+). The enzyme catalyses erythromycin D + S-adenosyl-L-methionine = erythromycin B + S-adenosyl-L-homocysteine + H(+). It functions in the pathway antibiotic biosynthesis; erythromycin biosynthesis. In terms of biological role, S-adenosyl-L-methionine-dependent O-methyltransferase that catalyzes the last step in the erythromycin biosynthesis pathway. Methylates the position 3 of the mycarosyl moiety of erythromycin C, forming the most active form of the antibiotic, erythromycin A. Can also methylate the precursor erythromycin D, forming erythromycin B. This Saccharopolyspora erythraea (strain ATCC 11635 / DSM 40517 / JCM 4748 / NBRC 13426 / NCIMB 8594 / NRRL 2338) protein is Erythromycin 3''-O-methyltransferase (eryG).